We begin with the raw amino-acid sequence, 342 residues long: CMP-N-acetylneuraminate-beta-galactosamide-alpha-2,3-sialyltransferase 1 (342 aa).

Residues 1–10 (MVTVRKRNVK) lie on the Cytoplasmic side of the membrane. A helical; Signal-anchor for type II membrane protein membrane pass occupies residues 11 to 28 (VFTFAFVLITVTSFLLNY). Topologically, residues 29–342 (KHQVTMTTWD…IEKIKFFKGR (314 aa)) are lumenal. Intrachain disulfides connect C61–C66, C63–C141, and C144–C283. N81 carries an N-linked (GlcNAc...) asparagine glycan. Q107 serves as a coordination point for substrate. A glycan (N-linked (GlcNAc...) asparagine) is linked at N116. N149 and N172 together coordinate substrate. Residues N203 and N229 are each glycosylated (N-linked (GlcNAc...) asparagine). Substrate contacts are provided by Y232, Y268, G272, G292, and H301. N306 carries N-linked (GlcNAc...) asparagine glycosylation. Residue H318 coordinates substrate. N325 carries N-linked (GlcNAc...) asparagine glycosylation.

It belongs to the glycosyltransferase 29 family. In terms of processing, the soluble form derives from the membrane form by proteolytic processing.

It is found in the golgi apparatus. It localises to the golgi stack membrane. The protein localises to the secreted. The catalysed reaction is a beta-D-galactosyl-(1-&gt;3)-N-acetyl-alpha-D-galactosaminyl derivative + CMP-N-acetyl-beta-neuraminate = an N-acetyl-alpha-neuraminyl-(2-&gt;3)-beta-D-galactosyl-(1-&gt;3)-N-acetyl-alpha-D-galactosaminyl derivative + CMP + H(+). The protein operates within protein modification; protein glycosylation. Responsible for the synthesis of the sequence NeuAc-alpha-2,3-Gal-beta-1,3-GalNAc- found on sugar chains O-linked to Thr or Ser and also as a terminal sequence on certain gangliosides. SIAT4A and SIAT4B sialylate the same acceptor substrates but exhibit different Km values. This Gallus gallus (Chicken) protein is CMP-N-acetylneuraminate-beta-galactosamide-alpha-2,3-sialyltransferase 1 (ST3GAL1).